The following is a 292-amino-acid chain: Pyridoxal 5'-phosphate synthase subunit PdxS (292 aa).

Aspartate 22 contacts D-ribose 5-phosphate. Lysine 79 functions as the Schiff-base intermediate with D-ribose 5-phosphate in the catalytic mechanism. A D-ribose 5-phosphate-binding site is contributed by glycine 151. Arginine 163 is a binding site for D-glyceraldehyde 3-phosphate. Residues glycine 212 and 233-234 (GS) each bind D-ribose 5-phosphate.

Belongs to the PdxS/SNZ family. In the presence of PdxT, forms a dodecamer of heterodimers.

It carries out the reaction aldehydo-D-ribose 5-phosphate + D-glyceraldehyde 3-phosphate + L-glutamine = pyridoxal 5'-phosphate + L-glutamate + phosphate + 3 H2O + H(+). Its pathway is cofactor biosynthesis; pyridoxal 5'-phosphate biosynthesis. Catalyzes the formation of pyridoxal 5'-phosphate from ribose 5-phosphate (RBP), glyceraldehyde 3-phosphate (G3P) and ammonia. The ammonia is provided by the PdxT subunit. Can also use ribulose 5-phosphate and dihydroxyacetone phosphate as substrates, resulting from enzyme-catalyzed isomerization of RBP and G3P, respectively. This is Pyridoxal 5'-phosphate synthase subunit PdxS from Caldanaerobacter subterraneus subsp. tengcongensis (strain DSM 15242 / JCM 11007 / NBRC 100824 / MB4) (Thermoanaerobacter tengcongensis).